Here is a 287-residue protein sequence, read N- to C-terminus: Protein REVEILLE 3 (287 aa).

Positions 56-110 constitute an HTH myb-type domain; that stretch reads TITKSRENWTEQEHDKFLEALHLFDRDWKKIKAFVGSKTVIQIRSHAQKYFLKVQ. Residues 83–106 constitute a DNA-binding region (H-T-H motif); it reads WKKIKAFVGSKTVIQIRSHAQKYF. Positions 111 to 135 are disordered; the sequence is KNGTKEHLPPPRPKRKANHPYPQKA.

It is found in the nucleus. Its function is as follows. Probable transcription factor. The sequence is that of Protein REVEILLE 3 (RVE3) from Arabidopsis thaliana (Mouse-ear cress).